The sequence spans 82 residues: U6 snRNA-associated Sm-like protein LSm6 (82 aa).

In terms of domain architecture, Sm spans 13-82 (DPSGFLSEII…GNNVMYISAD (70 aa)).

The protein belongs to the snRNP Sm proteins family. SmF/LSm6 subfamily. In terms of assembly, component of the heptameric LSM1-LSM7 complex, which consists of snr-1/lsm1, snr-2/lsm2, snr-3/lsm3, snr-4/lsm4, snr-5/lsm5, snr-6/lsm6 and snr-7/lsm7. Component of the heptameric LSM2-LSM8 complex, which consists of snr-2/lsm2, snr-3/lsm3, snr-4/lsm4, snr-5/lsm5, snr-6/lsm6, snr-7/lsm7 and snr-8/lsm8. The LSm subunits form a seven-membered ring structure with a doughnut shape.

The protein resides in the cytoplasm. The protein localises to the nucleus. In terms of biological role, component of LSm protein complexes, which are involved in RNA processing and may function in a chaperone-like manner, facilitating the efficient association of RNA processing factors with their substrates. Component of the cytoplasmic LSM1-LSM7 complex, which is thought to be involved in mRNA degradation by activating the decapping step in the 5'-to-3' mRNA decay pathway. Component of the nuclear LSM2-LSM8 complex, which is involved in splicing of nuclear mRNAs. LSM2-LSM8 associates with multiple snRNP complexes containing the U6 snRNA (U4/U6 di-snRNP, spliceosomal U4/U6.U5 tri-snRNP, and free U6 snRNP). It binds directly to the 3'-terminal U-tract of U6 snRNA and plays a role in the biogenesis and stability of the U6 snRNP and U4/U6 snRNP complexes. LSM2-LSM8 probably also is involved degradation of nuclear pre-mRNA by targeting them for decapping, and in processing of pre-tRNAs, pre-rRNAs and U3 snoRNA. This is U6 snRNA-associated Sm-like protein LSm6 (snr-6) from Neurospora crassa (strain ATCC 24698 / 74-OR23-1A / CBS 708.71 / DSM 1257 / FGSC 987).